A 141-amino-acid polypeptide reads, in one-letter code: Large ribosomal subunit protein uL11 (141 aa).

The protein belongs to the universal ribosomal protein uL11 family. As to quaternary structure, part of the ribosomal stalk of the 50S ribosomal subunit. Interacts with L10 and the large rRNA to form the base of the stalk. L10 forms an elongated spine to which L12 dimers bind in a sequential fashion forming a multimeric L10(L12)X complex. In terms of processing, one or more lysine residues are methylated.

Functionally, forms part of the ribosomal stalk which helps the ribosome interact with GTP-bound translation factors. In Campylobacter fetus subsp. fetus (strain 82-40), this protein is Large ribosomal subunit protein uL11.